Consider the following 72-residue polypeptide: MAKEDVIEIEGKVVDTMPNAMFTVELENGHQVLATVSGKIRKNYIRILVGDRVTVELSPYDLTRGRITYRFK.

One can recognise an S1-like domain in the interval 1-72 (MAKEDVIEIE…TRGRITYRFK (72 aa)).

This sequence belongs to the IF-1 family. As to quaternary structure, component of the 30S ribosomal translation pre-initiation complex which assembles on the 30S ribosome in the order IF-2 and IF-3, IF-1 and N-formylmethionyl-tRNA(fMet); mRNA recruitment can occur at any time during PIC assembly.

Its subcellular location is the cytoplasm. In terms of biological role, one of the essential components for the initiation of protein synthesis. Stabilizes the binding of IF-2 and IF-3 on the 30S subunit to which N-formylmethionyl-tRNA(fMet) subsequently binds. Helps modulate mRNA selection, yielding the 30S pre-initiation complex (PIC). Upon addition of the 50S ribosomal subunit IF-1, IF-2 and IF-3 are released leaving the mature 70S translation initiation complex. This chain is Translation initiation factor IF-1, found in Streptococcus suis (strain 05ZYH33).